A 361-amino-acid chain; its full sequence is tRNA-specific 2-thiouridylase MnmA (361 aa).

ATP is bound by residues 6-13 and isoleucine 32; that span reads LVSGGVDS. The interval 93 to 95 is interaction with target base in tRNA; the sequence is NPD. Cysteine 98 (nucleophile) is an active-site residue. A disulfide bridge connects residues cysteine 98 and cysteine 193. An ATP-binding site is contributed by glycine 121. The interaction with tRNA stretch occupies residues 143–145; that stretch reads KDQ. Catalysis depends on cysteine 193, which acts as the Cysteine persulfide intermediate.

The protein belongs to the MnmA/TRMU family.

It is found in the cytoplasm. The enzyme catalyses S-sulfanyl-L-cysteinyl-[protein] + uridine(34) in tRNA + AH2 + ATP = 2-thiouridine(34) in tRNA + L-cysteinyl-[protein] + A + AMP + diphosphate + H(+). Catalyzes the 2-thiolation of uridine at the wobble position (U34) of tRNA, leading to the formation of s(2)U34. This is tRNA-specific 2-thiouridylase MnmA from Porphyromonas gingivalis (strain ATCC BAA-308 / W83).